The sequence spans 205 residues: Golgi to ER traffic protein 1 (205 aa).

Residues 1–9 (MFELQPSSI) lie on the Lumenal side of the membrane. A helical transmembrane segment spans residues 10 to 29 (VVLVFCVLAIKVCISLIGKT). Residues 30 to 116 (TIQDRIWYLY…QISKLVNLAI (87 aa)) lie on the Cytoplasmic side of the membrane. The stretch at 53–103 (ALAQKREELVRVNKERRAISAQDEYAKWTKLNRQFDKLNSEVNDLAEATSS) forms a coiled coil. Residues 117 to 137 (AATTTAPIWFSRIWYRKVVLF) form a helical membrane-spanning segment. At 138-161 (YLPPKVFPYYIEWVLALPFIVTGG) the chain is on the lumenal side. Residues 162-178 (VGLTVWMFALNSVLSSL) traverse the membrane as a helical segment. Residues 179 to 205 (EFLIKFYLEEPVKKPEAPAASEAQTKQ) lie on the Cytoplasmic side of the membrane.

Belongs to the WRB/GET1 family. In terms of assembly, component of the Golgi to ER traffic (GET) complex, which is composed of GET1, GET2 and GET3. Within the complex, GET1 and GET2 form a heterotetramer which is stabilized by phosphatidylinositol binding and which binds to the GET3 homodimer.

The protein resides in the endoplasmic reticulum membrane. It localises to the golgi apparatus membrane. In terms of biological role, required for the post-translational delivery of tail-anchored (TA) proteins to the endoplasmic reticulum. Together with GET2, acts as a membrane receptor for soluble GET3, which recognizes and selectively binds the transmembrane domain of TA proteins in the cytosol. The GET complex cooperates with the HDEL receptor ERD2 to mediate the ATP-dependent retrieval of resident ER proteins that contain a C-terminal H-D-E-L retention signal from the Golgi to the ER. In Clavispora lusitaniae (strain ATCC 42720) (Yeast), this protein is Golgi to ER traffic protein 1.